Here is a 264-residue protein sequence, read N- to C-terminus: 5'-nucleotidase SurE (264 aa).

A divalent metal cation-binding residues include aspartate 10, aspartate 11, serine 43, and asparagine 99.

It belongs to the SurE nucleotidase family. A divalent metal cation serves as cofactor.

The protein resides in the cytoplasm. It catalyses the reaction a ribonucleoside 5'-phosphate + H2O = a ribonucleoside + phosphate. Its function is as follows. Nucleotidase that shows phosphatase activity on nucleoside 5'-monophosphates. The chain is 5'-nucleotidase SurE from Methanococcus maripaludis (strain C6 / ATCC BAA-1332).